Here is a 174-residue protein sequence, read N- to C-terminus: RNA pyrophosphohydrolase (174 aa).

In terms of domain architecture, Nudix hydrolase spans 6–149 (GFRANVGIII…KRDVYRKVMK (144 aa)). The Nudix box motif lies at 38 to 59 (GGVDDGESAEEAMYRELYEEVG).

This sequence belongs to the Nudix hydrolase family. RppH subfamily. A divalent metal cation serves as cofactor.

Its function is as follows. Accelerates the degradation of transcripts by removing pyrophosphate from the 5'-end of triphosphorylated RNA, leading to a more labile monophosphorylated state that can stimulate subsequent ribonuclease cleavage. The polypeptide is RNA pyrophosphohydrolase (Shewanella oneidensis (strain ATCC 700550 / JCM 31522 / CIP 106686 / LMG 19005 / NCIMB 14063 / MR-1)).